Consider the following 1750-residue polypeptide: Brefeldin A-inhibited guanine nucleotide-exchange protein 3 (1750 aa).

The residue at position 2 (alanine 2) is an N-acetylalanine. Disordered regions lie at residues 44-65 and 565-596; these read LRSPENSSPVADSESGSSIPGP and EEGSHPVENGKGDGGHGGFERSDSQSELSSGN. Residues 47–61 are compositionally biased toward polar residues; the sequence is PENSSPVADSESGSS. Basic and acidic residues predominate over residues 565 to 588; that stretch reads EEGSHPVENGKGDGGHGGFERSDS. A Phosphoserine modification is found at serine 586. An SEC7 domain is found at 601 to 788; it reads AIEQRRAYKL…RALYERISRN (188 aa). The active site involves glutamate 703. Serine 1307 is modified (phosphoserine).

In terms of assembly, homodimer.

It is found in the cytoplasm. The protein localises to the cytosol. The protein resides in the membrane. Inhibited by brefeldin A. Its function is as follows. Activates the ARF proteins by exchanging bound GDP for free GTP. Plays a role in vesicular protein sorting. Involved both in the nuclear division phase and in the nuclear fusion phase. The protein is Brefeldin A-inhibited guanine nucleotide-exchange protein 3 (BIG3) of Arabidopsis thaliana (Mouse-ear cress).